Reading from the N-terminus, the 354-residue chain is MFSRKSLSIFSTLRNYSSSTSKIQKVTLIPGDGIGPEISESVKRVFSAVKAPIEWETVVVDANTGISKEVIESISKNKIGLKGPISTPIGTGHQSLNLGLRKTFNLYANIRPCLSIPGHKTRYNNVNTVVVRENTEGEYSGIENQPVKGVAQSIKIITKEASTRIAHYAFQYALANGRKKVTCIHKANIMKQSDGLFVKSCREVSTRYPSIKYEELTIDNNCMQLVLDPNQMDVMVLPNLYGDIVSDLCAGLIGGLGLTPSGNIGENGSAIFEAVHGTAPDIAGKNKANPTALILSSIMMLRHLGHFHEASIIENAVLNTLTEGKVKTGDLGGNSSCSEYTDELVKKITESLNK.

Positions 95, 97, 101, 111, and 132 each coordinate substrate. Mg(2+)-binding residues include Asp219, Asp243, and Asp247. NADP(+) contacts are provided by residues 276–282 (HGTAPDI) and Asn289.

It belongs to the isocitrate and isopropylmalate dehydrogenases family. As to quaternary structure, heterooligomer of catalytic and regulatory subunits. Mg(2+) is required as a cofactor. The cofactor is Mn(2+).

The protein resides in the mitochondrion. It carries out the reaction D-threo-isocitrate + NAD(+) = 2-oxoglutarate + CO2 + NADH. Its function is as follows. Performs an essential role in the oxidative function of the citric acid cycle. The sequence is that of Isocitrate dehydrogenase [NAD] regulatory subunit A, mitochondrial (idhA) from Dictyostelium discoideum (Social amoeba).